The following is a 476-amino-acid chain: mRNA cap guanine-N(7) methyltransferase (476 aa).

Residues 1–14 (MANSTKAEEYEKMS) show a composition bias toward basic and acidic residues. The interval 1 to 128 (MANSTKAEEY…TGDGTQNKRK (128 aa)) is disordered. The span at 20 to 50 (ASVNSEAESSFSINENTTASGTGLSGKTSVC) shows a compositional bias: polar residues. Phosphoserine is present on residues serine 24, serine 28, and serine 29. Composition is skewed to basic and acidic residues over residues 54–68 (DTAR…DLVK), 84–93 (LDPEIVPEEK), and 107–117 (RETEDVPKDEY). Serine 118 is modified (phosphoserine). Positions 126 to 128 (KRK) match the Nuclear localization signal motif. The mRNA cap 0 methyltransferase domain maps to 167–475 (SRIFYLRNFN…IYLVFAFEKQ (309 aa)). Position 176–177 (176–177 (NN)) interacts with mRNA. Residues lysine 180, glycine 205, aspartate 227, aspartate 261, glutamine 284, and tyrosine 289 each contribute to the S-adenosyl-L-methionine site.

This sequence belongs to the class I-like SAM-binding methyltransferase superfamily. mRNA cap 0 methyltransferase family. Interacts with importin alpha, leading to stimulate both RNA-binding and methyltransferase activity. Interaction with importin alpha and beta is required for its nuclear localization, importin beta dissociating in response to RanGTP, allowing RNMT-importin alpha to bind RNA substrates. Interacts with elongating form of polymerase II and RNGTT. Interacts with RAMAC, this interaction significantly enhances RNA-binding and cap methyltransferase activity.

The protein localises to the nucleus. The enzyme catalyses a 5'-end (5'-triphosphoguanosine)-ribonucleoside in mRNA + S-adenosyl-L-methionine = a 5'-end (N(7)-methyl 5'-triphosphoguanosine)-ribonucleoside in mRNA + S-adenosyl-L-homocysteine. With respect to regulation, methyltransferase activity is activated by RAMAC. Functionally, catalytic subunit of the mRNA-capping methyltransferase RNMT:RAMAC complex that methylates the N7 position of the added guanosine to the 5'-cap structure of mRNAs. Binds RNA containing 5'-terminal GpppC. This is mRNA cap guanine-N(7) methyltransferase (RNMT) from Macaca fascicularis (Crab-eating macaque).